The sequence spans 637 residues: Palmitoyltransferase Hip14 (637 aa).

Over 1–295 the chain is Cytoplasmic; that stretch reads MYQSACQAAT…SKLRHDKRLR (295 aa). ANK repeat units follow at residues 77 to 106, 111 to 140, 144 to 173, 177 to 207, and 212 to 242; these read ETVT…TVDA, LNAT…DPRI, EGCS…DPDL, GGMT…NPAM, and HGNT…SLDV. Residues 296-315 form a helical membrane-spanning segment; that stretch reads WWSMVACPFTAFYLAGIVFT. Topologically, residues 316–318 are lumenal; it reads VNT. Residues 319–341 traverse the membrane as a helical segment; the sequence is LYIIKFFLLGCLYSIFHTIGKAL. Topologically, residues 342–345 are cytoplasmic; sequence FDEH. A helical membrane pass occupies residues 346-366; the sequence is LMALLPLSVYLATKAWFYVTW. The Lumenal portion of the chain corresponds to 367–373; the sequence is LMYIDDA. The helical transmembrane segment at 374–394 threads the bilayer; that stretch reads VSFTATVCFLISSLLLWVCFL. The Cytoplasmic segment spans residues 395-472; that stretch reads KSWKGDPGII…VGNCIGLKNH (78 aa). A DHHC domain is found at 430-480; it reads SFCSGCLVRRPIRSKHCSVCDRCVARFDHHCPWVGNCIGLKNHSYFMGFLW. Cys460 functions as the S-palmitoyl cysteine intermediate in the catalytic mechanism. A helical transmembrane segment spans residues 473–493; the sequence is SYFMGFLWMLLIMCAWMLYGG. At 494–520 the chain is on the lumenal side; sequence SKYYVNQCNVRFDDFLGAMRAIGNCDA. The chain crosses the membrane as a helical span at residues 521–541; it reads WVGWVMGNALLHMSWVILLTI. The Cytoplasmic portion of the chain corresponds to 542–637; it reads CQTYQVICLG…DGMAGDHQYV (96 aa).

It belongs to the DHHC palmitoyltransferase family. AKR/ZDHHC17 subfamily. As to quaternary structure, interacts with dorsal-ventral patterning protein Sog. In stage 13-15 embryos, expressed in the central nervous system. At the third instar larval stage, expressed in the ventral nerve cord and is enriched in the neuropil.

The protein resides in the golgi apparatus membrane. The protein localises to the presynaptic cell membrane. The catalysed reaction is L-cysteinyl-[protein] + hexadecanoyl-CoA = S-hexadecanoyl-L-cysteinyl-[protein] + CoA. Probable palmitoyltransferase which is required for photoreceptor synaptic transmission and for the correct expression and localization of palmitoylated protein Csp and synaptosomal-associated protein Snap25. Probably palmitoylates Csp. Probably also palmitoylates the dorsal-ventral patterning protein Sog and promotes its secretion and activity and the stabilization of the membrane-bound form. Required for synaptic vesicle exocytosis. The protein is Palmitoyltransferase Hip14 of Drosophila melanogaster (Fruit fly).